A 252-amino-acid chain; its full sequence is Transmembrane ascorbate-dependent reductase CYB561 (252 aa).

N-acetylmethionine is present on Met-1. The Cytoplasmic segment spans residues 1–17 (MEGPASPARAPGALPYY). The chain crosses the membrane as a helical span at residues 18–38 (VAFSQLLGLIVVAMTGAWLGM). Positions 20 to 221 (FSQLLGLIVV…FATVILYILT (202 aa)) constitute a Cytochrome b561 domain. Over 39–52 (YRGGIAWESALQFN) the chain is Vesicular. A helical membrane pass occupies residues 53–73 (VHPLCMIIGLVFLQGDALLVY). Residues His-54, Arg-74, and Lys-81 each coordinate heme b. Residues 74–86 (RVFRNEAKRTTKV) lie on the Cytoplasmic side of the membrane. Residues Lys-81 and Lys-85 each contribute to the L-ascorbate site. The helical transmembrane segment at 87 to 107 (LHGLLHVFAFVIALVGLVAVF) threads the bilayer. Heme b contacts are provided by residues His-88, 117-120 (DLYS), and His-122. The Vesicular portion of the chain corresponds to 108 to 125 (EHHRKKGYADLYSLHSWC). A helical transmembrane segment spans residues 126-146 (GILVFALFFAQWLVGFSFFLF). Topologically, residues 147–159 (PGASFSLRSRYRP) are cytoplasmic. L-ascorbate is bound at residue Arg-154. The chain crosses the membrane as a helical span at residues 160 to 180 (QHVFFGAAIFLLSVATALLGL). The heme b site is built by His-161 and Glu-182. The Vesicular segment spans residues 181–199 (KEALLFELGTKYSMFEPEG). A helical membrane pass occupies residues 200-220 (VLANVLGLLLATFATVILYIL). Residues 221-252 (TRADWKRPLQAEEQALSMDFKTLTEGDSPSSQ) are Cytoplasmic-facing. Heme b is bound at residue Lys-226. Residues Ser-248 and Ser-250 each carry the phosphoserine modification.

Requires heme b as cofactor. In terms of tissue distribution, expressed in the adrenal medulla and all brain regions, but not in visceral organs.

The protein resides in the cytoplasmic vesicle. It is found in the secretory vesicle. Its subcellular location is the chromaffin granule membrane. The catalysed reaction is monodehydro-L-ascorbate radical(out) + L-ascorbate(in) = monodehydro-L-ascorbate radical(in) + L-ascorbate(out). In terms of biological role, transmembrane reductase that uses ascorbate as an electron donor in the cytoplasm and transfers electrons across membranes to reduce monodehydro-L-ascorbate radical in the lumen of secretory vesicles. It is therefore involved the regeneration and homeostasis within secretory vesicles of ascorbate which in turn provides reducing equivalents needed to support the activity of intravesicular enzymes. This is Transmembrane ascorbate-dependent reductase CYB561 (CYB561) from Bos taurus (Bovine).